The primary structure comprises 323 residues: Cyclin-H (323 aa).

Ser5 is modified (phosphoserine; by CDK8). A Phosphoserine modification is found at Ser132. The tract at residues 296–323 is disordered; that stretch reads GYEDDDYVSKKPKQEEEEWTDDDLVDAL. The residue at position 304 (Ser304) is a Phosphoserine; by CDK8. The segment covering 310–323 has biased composition (acidic residues); it reads EEEEWTDDDLVDAL. Residue Thr315 is modified to Phosphothreonine.

Belongs to the cyclin family. Cyclin C subfamily. As to quaternary structure, associates primarily with CDK7 and MAT1 to form the CAK complex. CAK can further associate with the core-TFIIH to form the TFIIH basal transcription factor.

The protein resides in the nucleus. Functionally, regulates CDK7, the catalytic subunit of the CDK-activating kinase (CAK) enzymatic complex. CAK activates the cyclin-associated kinases CDK1, CDK2, CDK4 and CDK6 by threonine phosphorylation. CAK complexed to the core-TFIIH basal transcription factor activates RNA polymerase II by serine phosphorylation of the repetitive C-terminal domain (CTD) of its large subunit (POLR2A), allowing its escape from the promoter and elongation of the transcripts. Involved in cell cycle control and in RNA transcription by RNA polymerase II. Its expression and activity are constant throughout the cell cycle. The polypeptide is Cyclin-H (Ccnh) (Rattus norvegicus (Rat)).